The chain runs to 476 residues: Eukaryotic translation initiation factor 3 subunit L (476 aa).

One can recognise a PCI domain in the interval 257–452 (DAIRMFSHIL…DLDYALENDL (196 aa)).

Belongs to the eIF-3 subunit L family. Component of the eukaryotic translation initiation factor 3 (eIF-3) complex.

It is found in the cytoplasm. Component of the eukaryotic translation initiation factor 3 (eIF-3) complex, which is involved in protein synthesis of a specialized repertoire of mRNAs and, together with other initiation factors, stimulates binding of mRNA and methionyl-tRNAi to the 40S ribosome. The eIF-3 complex specifically targets and initiates translation of a subset of mRNAs involved in cell proliferation. The chain is Eukaryotic translation initiation factor 3 subunit L from Neosartorya fischeri (strain ATCC 1020 / DSM 3700 / CBS 544.65 / FGSC A1164 / JCM 1740 / NRRL 181 / WB 181) (Aspergillus fischerianus).